A 406-amino-acid chain; its full sequence is Glutamyl-tRNA(Gln) amidotransferase subunit D (406 aa).

The Asparaginase/glutaminase domain occupies 68–390 (KSISILATGG…EEFINVFNRN (323 aa)). Catalysis depends on residues Thr-78, Thr-152, Asp-153, and Lys-230.

This sequence belongs to the asparaginase 1 family. GatD subfamily. Heterodimer of GatD and GatE.

It carries out the reaction L-glutamyl-tRNA(Gln) + L-glutamine + ATP + H2O = L-glutaminyl-tRNA(Gln) + L-glutamate + ADP + phosphate + H(+). Allows the formation of correctly charged Gln-tRNA(Gln) through the transamidation of misacylated Glu-tRNA(Gln) in organisms which lack glutaminyl-tRNA synthetase. The reaction takes place in the presence of glutamine and ATP through an activated gamma-phospho-Glu-tRNA(Gln). The GatDE system is specific for glutamate and does not act on aspartate. This chain is Glutamyl-tRNA(Gln) amidotransferase subunit D, found in Thermoplasma volcanium (strain ATCC 51530 / DSM 4299 / JCM 9571 / NBRC 15438 / GSS1).